We begin with the raw amino-acid sequence, 224 residues long: Orotate phosphoribosyltransferase (224 aa).

5-phospho-alpha-D-ribose 1-diphosphate-binding positions include Lys26, 73–74, Arg100, Lys101, Lys104, His106, and 127–135; these read YK and EDVTTAGTS. Residues Thr131 and Arg160 each contribute to the orotate site.

This sequence belongs to the purine/pyrimidine phosphoribosyltransferase family. PyrE subfamily. In terms of assembly, homodimer. Requires Mg(2+) as cofactor.

It carries out the reaction orotidine 5'-phosphate + diphosphate = orotate + 5-phospho-alpha-D-ribose 1-diphosphate. It participates in pyrimidine metabolism; UMP biosynthesis via de novo pathway; UMP from orotate: step 1/2. In terms of biological role, catalyzes the transfer of a ribosyl phosphate group from 5-phosphoribose 1-diphosphate to orotate, leading to the formation of orotidine monophosphate (OMP). This chain is Orotate phosphoribosyltransferase, found in Clostridium acetobutylicum (strain ATCC 824 / DSM 792 / JCM 1419 / IAM 19013 / LMG 5710 / NBRC 13948 / NRRL B-527 / VKM B-1787 / 2291 / W).